The following is a 683-amino-acid chain: DNA ligase (683 aa).

Residues 36–40, 85–86, and glutamate 119 each bind NAD(+); these read DAEYD and SL. Lysine 121 acts as the N6-AMP-lysine intermediate in catalysis. Residues arginine 142, glutamate 179, lysine 295, and lysine 319 each coordinate NAD(+). Zn(2+) contacts are provided by cysteine 413, cysteine 416, cysteine 431, and cysteine 437. Positions 596–683 constitute a BRCT domain; sequence TETLPLSGQT…EHQAHLGGEA (88 aa).

The protein belongs to the NAD-dependent DNA ligase family. LigA subfamily. Mg(2+) serves as cofactor. The cofactor is Mn(2+).

The catalysed reaction is NAD(+) + (deoxyribonucleotide)n-3'-hydroxyl + 5'-phospho-(deoxyribonucleotide)m = (deoxyribonucleotide)n+m + AMP + beta-nicotinamide D-nucleotide.. Its function is as follows. DNA ligase that catalyzes the formation of phosphodiester linkages between 5'-phosphoryl and 3'-hydroxyl groups in double-stranded DNA using NAD as a coenzyme and as the energy source for the reaction. It is essential for DNA replication and repair of damaged DNA. The polypeptide is DNA ligase (Hahella chejuensis (strain KCTC 2396)).